Consider the following 1128-residue polypeptide: Transient receptor potential-gamma protein (1128 aa).

The Cytoplasmic portion of the chain corresponds to 1-325 (MMEEENTIRP…MALQAVDIIR (325 aa)). ANK repeat units follow at residues 57-86 (LGRTALLMAIDNENLEMVELLINYNVDTKD) and 131-160 (PDITPLILAAHRDNYEIIKILLDRGAVLPM). The chain crosses the membrane as a helical span at residues 326 to 346 (IGIMFPIFSLAYILAPYSSIG). At 347 to 403 (QTMRKPFIKFICHSASYFTFLFLLMLASQRIETFIGGWFFADSSGMLNTMEELPTKR) the chain is on the extracellular side. Residues 404-424 (GAKPTFIEWLILAWVSGLIWS) traverse the membrane as a helical segment. Residues 425-444 (EVKQLWDVGLQEYLNDMWNV) lie on the Cytoplasmic side of the membrane. The chain crosses the membrane as a helical span at residues 445-465 (IDFVTNSLYVATVALRVVSFF). The Extracellular segment spans residues 466 to 492 (QVQKEMIYNSHATDLPRERWDAWDPML). The chain crosses the membrane as a helical span at residues 493–513 (ISEGLFSAANIFSSLKLVYIF). Topologically, residues 514–535 (SVNPHLGPLQVSLSRMVMDIMK) are cytoplasmic. Residues 536 to 556 (FFFLYVLVLFAFGSGLNQLLW) form a helical membrane-spanning segment. The Extracellular segment spans residues 557–629 (YYADLEKKRC…GIKIFTRFWG (73 aa)). Residues 630–650 (MLMFGTYSVINIVVLLNLLIA) form a helical membrane-spanning segment. Residues 651 to 1128 (MMNHSYQLIS…SCVSTTGAIG (478 aa)) are Cytoplasmic-facing. Disordered regions lie at residues 865–898 (RQQSQAGSGGGGSESPTTPTAPQGTQGAAMTASS) and 1064–1111 (AAEA…SVNS). The segment covering 878–893 (ESPTTPTAPQGTQGAA) has biased composition (low complexity). Residues 1085 to 1111 (TQSQHDSVETNSTFTLSIDPSNTSVNS) show a composition bias toward polar residues.

It belongs to the transient receptor (TC 1.A.4) family. STrpC subfamily. As to quaternary structure, interacts preferentially with trpl and interacts to a lower extent with trp. As to expression, expressed predominantly in the rhabdomeres of photoreceptor cells.

The protein resides in the cell projection. It localises to the rhabdomere membrane. Its function is as follows. A light-sensitive calcium channel that is required for inositide-mediated Ca(2+) entry in the retina during phospholipase C (PLC)-mediated phototransduction. Forms a regulated cation channel when heteromultimerized with trpl. The polypeptide is Transient receptor potential-gamma protein (Trpgamma) (Drosophila melanogaster (Fruit fly)).